Consider the following 117-residue polypeptide: Large ribosomal subunit protein bL20c (117 aa).

This sequence belongs to the bacterial ribosomal protein bL20 family.

It is found in the plastid. The protein resides in the chloroplast. Functionally, binds directly to 23S ribosomal RNA and is necessary for the in vitro assembly process of the 50S ribosomal subunit. It is not involved in the protein synthesizing functions of that subunit. The polypeptide is Large ribosomal subunit protein bL20c (Lemna minor (Common duckweed)).